Reading from the N-terminus, the 335-residue chain is Dihydroorotate dehydrogenase (quinone) (335 aa).

FMN-binding positions include 59–63 (AGADK) and T83. K63 contacts substrate. A substrate-binding site is contributed by 108 to 112 (NRNGF). N136 and N169 together coordinate FMN. N169 lines the substrate pocket. Catalysis depends on S172, which acts as the Nucleophile. A substrate-binding site is contributed by N174. K214 and G242 together coordinate FMN. 243–244 (NT) serves as a coordination point for substrate. Residues G265, G294, and 315–316 (YS) each bind FMN.

This sequence belongs to the dihydroorotate dehydrogenase family. Type 2 subfamily. As to quaternary structure, monomer. It depends on FMN as a cofactor.

Its subcellular location is the cell membrane. It carries out the reaction (S)-dihydroorotate + a quinone = orotate + a quinol. It functions in the pathway pyrimidine metabolism; UMP biosynthesis via de novo pathway; orotate from (S)-dihydroorotate (quinone route): step 1/1. Its function is as follows. Catalyzes the conversion of dihydroorotate to orotate with quinone as electron acceptor. The chain is Dihydroorotate dehydrogenase (quinone) from Glaesserella parasuis serovar 5 (strain SH0165) (Haemophilus parasuis).